Consider the following 211-residue polypeptide: Ribosomal RNA large subunit methyltransferase E (211 aa).

Residues Gly60, Trp62, Asp80, Asp96, and Asp121 each contribute to the S-adenosyl-L-methionine site. Residue Lys161 is the Proton acceptor of the active site.

It belongs to the class I-like SAM-binding methyltransferase superfamily. RNA methyltransferase RlmE family.

Its subcellular location is the cytoplasm. It carries out the reaction uridine(2552) in 23S rRNA + S-adenosyl-L-methionine = 2'-O-methyluridine(2552) in 23S rRNA + S-adenosyl-L-homocysteine + H(+). In terms of biological role, specifically methylates the uridine in position 2552 of 23S rRNA at the 2'-O position of the ribose in the fully assembled 50S ribosomal subunit. This Cellvibrio japonicus (strain Ueda107) (Pseudomonas fluorescens subsp. cellulosa) protein is Ribosomal RNA large subunit methyltransferase E.